The chain runs to 308 residues: Olfactory receptor 6F1 (308 aa).

At 1–25 the chain is on the extracellular side; it reads MDTGNKTLPQDFLLLGFPGSQTLQL. Residue Asn-5 is glycosylated (N-linked (GlcNAc...) asparagine). Residues 26–46 form a helical membrane-spanning segment; it reads SLFMLFLVMYILTVSGNVAIL. Residues 47 to 54 lie on the Cytoplasmic side of the membrane; it reads MLVSTSHQ. A helical membrane pass occupies residues 55-75; it reads LHTPMYFFLSNLSFLEIWYTT. Residues 76-99 are Extracellular-facing; the sequence is AAVPKALAILLGRSQTISFTSCLL. Cys-97 and Cys-189 are disulfide-bonded. A helical transmembrane segment spans residues 100 to 120; sequence QMYFVFSLGCTEYFLLAAMAY. Topologically, residues 121 to 139 are cytoplasmic; sequence DRCLAICYPLHYGAIMSSL. Residues 140-160 traverse the membrane as a helical segment; the sequence is LSAQLALGSWVCGFVAIAVPT. Topologically, residues 161–197 are extracellular; sequence ALISGLSFCGPRAINHFFCDIAPWIALACTNTQAVEL. Residues 198–217 form a helical membrane-spanning segment; it reads VAFVIAVVVILSSCLITFVS. Over 218 to 237 the chain is Cytoplasmic; the sequence is YVYIISTILRIPSASGRSKA. The chain crosses the membrane as a helical span at residues 238–258; that stretch reads FSTCSSHLTVVLIWYGSTVFL. At 259-271 the chain is on the extracellular side; sequence HVRTSIKDALDLI. The helical transmembrane segment at 272-292 threads the bilayer; it reads KAVHVLNTVVTPVLNPFIYTL. Over 293–308 the chain is Cytoplasmic; that stretch reads RNKEVRETLLKKWKGK.

The protein belongs to the G-protein coupled receptor 1 family.

It is found in the cell membrane. Its function is as follows. Odorant receptor. In Homo sapiens (Human), this protein is Olfactory receptor 6F1 (OR6F1).